Here is a 473-residue protein sequence, read N- to C-terminus: ATP synthase subunit beta (473 aa).

153 to 160 (GGAGVGKT) is an ATP binding site.

It belongs to the ATPase alpha/beta chains family. In terms of assembly, F-type ATPases have 2 components, CF(1) - the catalytic core - and CF(0) - the membrane proton channel. CF(1) has five subunits: alpha(3), beta(3), gamma(1), delta(1), epsilon(1). CF(0) has three main subunits: a(1), b(2) and c(9-12). The alpha and beta chains form an alternating ring which encloses part of the gamma chain. CF(1) is attached to CF(0) by a central stalk formed by the gamma and epsilon chains, while a peripheral stalk is formed by the delta and b chains.

The protein resides in the cell inner membrane. It catalyses the reaction ATP + H2O + 4 H(+)(in) = ADP + phosphate + 5 H(+)(out). Its function is as follows. Produces ATP from ADP in the presence of a proton gradient across the membrane. The catalytic sites are hosted primarily by the beta subunits. The sequence is that of ATP synthase subunit beta from Rickettsia rickettsii (strain Iowa).